The sequence spans 491 residues: Cobyric acid synthase (491 aa).

Residues 246–435 (KIDVAVIKLP…IHGIFDGANF (190 aa)) form the GATase cobBQ-type domain. Cys327 acts as the Nucleophile in catalysis. Residue His427 is part of the active site.

It belongs to the CobB/CobQ family. CobQ subfamily.

It participates in cofactor biosynthesis; adenosylcobalamin biosynthesis. Catalyzes amidations at positions B, D, E, and G on adenosylcobyrinic A,C-diamide. NH(2) groups are provided by glutamine, and one molecule of ATP is hydrogenolyzed for each amidation. This Clostridium acetobutylicum (strain ATCC 824 / DSM 792 / JCM 1419 / IAM 19013 / LMG 5710 / NBRC 13948 / NRRL B-527 / VKM B-1787 / 2291 / W) protein is Cobyric acid synthase.